The primary structure comprises 314 residues: Acetaldehyde dehydrogenase 1/2 (314 aa).

12–15 (SGNI) contacts NAD(+). Cys-130 (acyl-thioester intermediate) is an active-site residue. NAD(+)-binding positions include 161-169 (SAGPGTRAN) and Asn-288.

It belongs to the acetaldehyde dehydrogenase family.

The enzyme catalyses acetaldehyde + NAD(+) + CoA = acetyl-CoA + NADH + H(+). The polypeptide is Acetaldehyde dehydrogenase 1/2 (Rhizorhabdus wittichii (strain DSM 6014 / CCUG 31198 / JCM 15750 / NBRC 105917 / EY 4224 / RW1) (Sphingomonas wittichii)).